The following is a 1462-amino-acid chain: DNA topoisomerase 2 (1462 aa).

ATP contacts are provided by residues N79, N108, 136–138 (SSN), and 149–156 (GRNGYGAK). Residues 332-334 (NKK) are interaction with DNA. Residue 365–367 (QTK) participates in ATP binding. The Toprim domain maps to 442-556 (CTLILTEGDS…SLLKVPSFLV (115 aa)). Mg(2+) is bound by residues E448, D525, and D527. One can recognise a Topo IIA-type catalytic domain in the interval 671-1131 (KDFVNKELIL…PTTSLWLKDL (461 aa)). The active-site O-(5'-phospho-DNA)-tyrosine intermediate is Y761. The interval 947-956 (KLTSTISTSN) is interaction with DNA. Disordered stretches follow at residues 1040-1077 (PMPRKGKSTKPQVAGANDDDSEEQEDAEPETASQSVSV) and 1147-1462 (EDDR…EDDD). Over residues 1056–1068 (NDDDSEEQEDAEP) the composition is skewed to acidic residues. The span at 1167-1181 (PAKKPPQPRKNTKKA) shows a compositional bias: basic residues. Over residues 1198–1207 (AVEAAKPAEV) the composition is skewed to low complexity. The span at 1240–1250 (IESSGEKSQAM) shows a compositional bias: polar residues. The span at 1260-1275 (AGKKQNNKRGGAKKKS) shows a compositional bias: basic residues. Over residues 1282 to 1300 (SDSDNEVNDVDDDDDDFEE) the composition is skewed to acidic residues. Low complexity-rich tracts occupy residues 1314–1334 (KPAAQNAKKAPAKAPAKAPAA) and 1419–1430 (APQPARARPQRA). Residues 1442–1462 (SESEEDSDEDAELSDFEEDDD) show a composition bias toward acidic residues.

The protein belongs to the type II topoisomerase family. In terms of assembly, homodimer. Mg(2+) is required as a cofactor. It depends on Mn(2+) as a cofactor. Ca(2+) serves as cofactor. As to expression, abundant in proliferative tissues.

It carries out the reaction ATP-dependent breakage, passage and rejoining of double-stranded DNA.. Control of topological states of DNA by transient breakage and subsequent rejoining of DNA strands. Topoisomerase II makes double-strand breaks. This is DNA topoisomerase 2 (TOP2) from Pisum sativum (Garden pea).